Here is a 720-residue protein sequence, read N- to C-terminus: Inactive serine protease PAMR1 (720 aa).

Residues 1–21 form the signal peptide; the sequence is MELGWWPQLGLAFLQLLLISS. 8 disulfide bridges follow: cysteine 128-cysteine 150, cysteine 177-cysteine 199, cysteine 239-cysteine 250, cysteine 244-cysteine 260, cysteine 262-cysteine 271, cysteine 280-cysteine 329, cysteine 315-cysteine 342, and cysteine 414-cysteine 442. Residues 128–236 form the CUB domain; it reads CGQVLRVPKG…DGFHAIFEEI (109 aa). An EGF-like domain is found at 235–272; sequence EITACSSSPCFHDGTCLLDSTGSYKCACLAGYTGKHCE. 2 Sushi domains span residues 278-344 and 387-444; these read RNCS…ICIK and APTK…SCIP. The region spanning 445 to 720 is the Peptidase S1 domain; the sequence is ICGKTENVSA…FKDWIERNMK (276 aa). Asparagine 451 is a glycosylation site (N-linked (GlcNAc...) asparagine). Cystine bridges form between cysteine 489–cysteine 505, cysteine 630–cysteine 649, and cysteine 661–cysteine 697.

This sequence belongs to the peptidase S1 family.

It localises to the secreted. May play a role in regeneration of skeletal muscle. The sequence is that of Inactive serine protease PAMR1 (PAMR1) from Bos taurus (Bovine).